The primary structure comprises 156 residues: Succinate dehydrogenase assembly factor 2-B, mitochondrial (156 aa).

A mitochondrion-targeting transit peptide spans 1-24 (MLRQLIVSTVGRRMPLQMISQSRL).

The protein belongs to the SDHAF2 family. As to quaternary structure, interacts with the flavoprotein subunit within the SDH catalytic dimer.

It is found in the mitochondrion matrix. Plays an essential role in the assembly of succinate dehydrogenase (SDH), an enzyme complex (also referred to as respiratory complex II) that is a component of both the tricarboxylic acid (TCA) cycle and the mitochondrial electron transport chain, and which couples the oxidation of succinate to fumarate with the reduction of ubiquinone (coenzyme Q) to ubiquinol. Required for flavinylation (covalent attachment of FAD) of the flavoprotein subunit of the SDH catalytic dimer. The protein is Succinate dehydrogenase assembly factor 2-B, mitochondrial of Drosophila erecta (Fruit fly).